Here is a 168-residue protein sequence, read N- to C-terminus: Phosphopantetheine adenylyltransferase (168 aa).

Threonine 17 is a binding site for substrate. Residues 17–18 (TF) and histidine 25 contribute to the ATP site. Substrate contacts are provided by lysine 49, leucine 81, and arginine 95. Residues 96 to 98 (GLR), glutamate 106, and 131 to 137 (LMYISST) each bind ATP.

The protein belongs to the bacterial CoaD family. As to quaternary structure, homohexamer. Requires Mg(2+) as cofactor.

It is found in the cytoplasm. The catalysed reaction is (R)-4'-phosphopantetheine + ATP + H(+) = 3'-dephospho-CoA + diphosphate. Its pathway is cofactor biosynthesis; coenzyme A biosynthesis; CoA from (R)-pantothenate: step 4/5. Reversibly transfers an adenylyl group from ATP to 4'-phosphopantetheine, yielding dephospho-CoA (dPCoA) and pyrophosphate. This is Phosphopantetheine adenylyltransferase from Legionella pneumophila (strain Paris).